A 220-amino-acid polypeptide reads, in one-letter code: Cytidylate kinase (220 aa).

9-17 (GPAASGKST) serves as a coordination point for ATP.

This sequence belongs to the cytidylate kinase family. Type 1 subfamily.

It localises to the cytoplasm. It catalyses the reaction CMP + ATP = CDP + ADP. The catalysed reaction is dCMP + ATP = dCDP + ADP. This chain is Cytidylate kinase, found in Thermotoga maritima (strain ATCC 43589 / DSM 3109 / JCM 10099 / NBRC 100826 / MSB8).